A 317-amino-acid polypeptide reads, in one-letter code: Tetraspanin-15 (317 aa).

The segment at 1-43 (MADNAQVVPVEEPAATATATATATATTEPEAKSSDQMESQSDN) is disordered. Over 1 to 60 (MADNAQVVPVEEPAATATATATATATTEPEAKSSDQMESQSDNKPPMGTLMALVNILAAG) the chain is Cytoplasmic. Low complexity predominate over residues 7–28 (VVPVEEPAATATATATATATTE). Residues 61–81 (VLPIFTFVLSLTLLGYAVWLL) form a helical membrane-spanning segment. Over 82–96 (YMRSYDCEDILGLPR) the chain is Extracellular. A helical membrane pass occupies residues 97 to 117 (VQTLASVGLLAVFVVSNAALF). At 118–126 (LRRKFPMPA) the chain is on the cytoplasmic side. A helical membrane pass occupies residues 127–147 (LVVMVVVLLLMLFIGLAYAGV). Residues 148–287 (NEMQSRRFPA…IRSVRRKWWQ (140 aa)) lie on the Extracellular side of the membrane. An N-linked (GlcNAc...) asparagine glycan is attached at Asn-224. Residues 288–308 (LGIFLIVISILLLMSHLLIFL) traverse the membrane as a helical segment. Residues 309-317 (ATFWERFKG) lie on the Cytoplasmic side of the membrane.

Belongs to the tetraspanin (TM4SF) family.

It localises to the membrane. Its function is as follows. May be involved in the regulation of cell differentiation. This is Tetraspanin-15 (TET15) from Arabidopsis thaliana (Mouse-ear cress).